Reading from the N-terminus, the 876-residue chain is MSKSTAEIRQAFLDFFHSKGHQVVASSSLVPHNDPTLLFTNAGMNQFKDVFLGLDKRNYSRATTSQRCVRAGGKHNDLENVGYTARHHTFFEMLGNFSFGDYFKHDAIQFAWELLTSEKWFALPKERLWVTVYESDDEAYEIWEKEVGIPRERIIRIGDNKGAPYASDNFWQMGDTGPCGPCTEIFYDHGDHIWGGPPGSPEEDGDRYIEIWNIVFMQFNRQADGTMEPLPKPSVDTGMGLERIAAVLQHVNSNYDIDLFRTLIQAVAKVTGATDLSNKSLRVIADHIRSCAFLIADGVMPSNENRGYVLRRIIRRAVRHGNMLGAKETFFYKLVGPLIDVMGSAGEDLKRQQAQVEQVLKTEEEQFARTLERGLALLDEELAKLSGDTLDGETAFRLYDTYGFPVDLTADVCRERNIKVDEAGFEAAMEEQRRRAREASGFGADYNAMIRVDSASEFKGYDHLELNGKVTALFVDGKAVDAINAGQEAVVVLDQTPFYAESGGQVGDKGELKGANFSFAVEDTQKYGQAIGHIGKLAAGSLKVGDAVQADIDEARRARIRLNHSATHLMHAALRQVLGTHVSQKGSLVNDKVLRFDFSHNEAMKPEEIRAVEDLVNAQIRRNLPIETNIMNLEAAKAKGAMALFGEKYDERVRVLSMGDFSTELCGGTHASRTGDIGLFRIISESGTAAGVRRIEAVTGEGAITTVHADSDRLSEVAHLLKGDSNNLADKVRSVLERTRQLEKELQQLKEQAAAQESANLSSKAIDVNGVKLLVSELSGVEPKMLRTMVDDLKNQLGSTIIVLATVAEGKVSLIAGVSKDVTDRVKAGELIGMVAQQVGGKGGGRPDMAQAGGTDAAALPAALASVKGWVSAKLQ.

Lysine 74 is modified (N6-acetyllysine). Zn(2+) is bound by residues histidine 564, histidine 568, cysteine 666, and histidine 670.

Belongs to the class-II aminoacyl-tRNA synthetase family. As to quaternary structure, homotetramer. Zn(2+) serves as cofactor.

The protein localises to the cytoplasm. It carries out the reaction tRNA(Ala) + L-alanine + ATP = L-alanyl-tRNA(Ala) + AMP + diphosphate. Its function is as follows. Catalyzes the attachment of alanine to tRNA(Ala) in a two-step reaction: alanine is first activated by ATP to form Ala-AMP and then transferred to the acceptor end of tRNA(Ala). Also edits incorrectly charged Ser-tRNA(Ala) and Gly-tRNA(Ala) via its editing domain. The polypeptide is Alanine--tRNA ligase (Shigella flexneri serotype 5b (strain 8401)).